We begin with the raw amino-acid sequence, 207 residues long: MPKVALFNQNGSTNGEIELNASVFGIEPNESVVFDAILMQRASLRQGTHKVKTRSEVRGGGRKPWRQKGTGRARQGSIRSPQWRGGGIVFGPTPRSYSYKLPKKVRRLAIKSVLSSKVIDNNIIVLEDLTLDAVKTKEFAGILKGLSVEKKALIVTADANETVALSARNIPGVTVVEANGINVLDVVNHEKLLITKAAVEKVEEGLA.

Residues 48-78 (THKVKTRSEVRGGGRKPWRQKGTGRARQGSI) are disordered. Residues 60–71 (GGRKPWRQKGTG) are compositionally biased toward basic residues.

It belongs to the universal ribosomal protein uL4 family. As to quaternary structure, part of the 50S ribosomal subunit.

One of the primary rRNA binding proteins, this protein initially binds near the 5'-end of the 23S rRNA. It is important during the early stages of 50S assembly. It makes multiple contacts with different domains of the 23S rRNA in the assembled 50S subunit and ribosome. Functionally, forms part of the polypeptide exit tunnel. This Bacillus pumilus (strain SAFR-032) protein is Large ribosomal subunit protein uL4.